Here is a 156-residue protein sequence, read N- to C-terminus: Small ribosomal subunit protein uS7 (156 aa).

Belongs to the universal ribosomal protein uS7 family. Part of the 30S ribosomal subunit. Contacts proteins S9 and S11.

Functionally, one of the primary rRNA binding proteins, it binds directly to 16S rRNA where it nucleates assembly of the head domain of the 30S subunit. Is located at the subunit interface close to the decoding center, probably blocks exit of the E-site tRNA. This Mycobacterium ulcerans (strain Agy99) protein is Small ribosomal subunit protein uS7.